The following is a 198-amino-acid chain: Recombination protein RecR (198 aa).

The C4-type zinc finger occupies 57-72 (CDKCNTFTEAQICEVC). In terms of domain architecture, Toprim spans 80–175 (TLLCVVETPA…AVTRLARGVP (96 aa)).

This sequence belongs to the RecR family.

May play a role in DNA repair. It seems to be involved in an RecBC-independent recombinational process of DNA repair. It may act with RecF and RecO. This Burkholderia multivorans (strain ATCC 17616 / 249) protein is Recombination protein RecR.